The sequence spans 338 residues: Ketol-acid reductoisomerase (NADP(+)) (338 aa).

The 181-residue stretch at 1-181 (MNVYYDKDCD…GGGRSGIIET (181 aa)) folds into the KARI N-terminal Rossmann domain. NADP(+) is bound by residues 24 to 27 (YGSQ), arginine 47, serine 50, serine 52, and 82 to 85 (DEFQ). Histidine 107 is an active-site residue. Glycine 133 is an NADP(+) binding site. The KARI C-terminal knotted domain occupies 182–327 (TFKDETETDL…AKLRSMMPWI (146 aa)). Mg(2+) is bound by residues aspartate 190, glutamate 194, glutamate 226, and glutamate 230. Serine 251 contributes to the substrate binding site.

It belongs to the ketol-acid reductoisomerase family. Mg(2+) is required as a cofactor.

The catalysed reaction is (2R)-2,3-dihydroxy-3-methylbutanoate + NADP(+) = (2S)-2-acetolactate + NADPH + H(+). It catalyses the reaction (2R,3R)-2,3-dihydroxy-3-methylpentanoate + NADP(+) = (S)-2-ethyl-2-hydroxy-3-oxobutanoate + NADPH + H(+). It functions in the pathway amino-acid biosynthesis; L-isoleucine biosynthesis; L-isoleucine from 2-oxobutanoate: step 2/4. It participates in amino-acid biosynthesis; L-valine biosynthesis; L-valine from pyruvate: step 2/4. Involved in the biosynthesis of branched-chain amino acids (BCAA). Catalyzes an alkyl-migration followed by a ketol-acid reduction of (S)-2-acetolactate (S2AL) to yield (R)-2,3-dihydroxy-isovalerate. In the isomerase reaction, S2AL is rearranged via a Mg-dependent methyl migration to produce 3-hydroxy-3-methyl-2-ketobutyrate (HMKB). In the reductase reaction, this 2-ketoacid undergoes a metal-dependent reduction by NADPH to yield (R)-2,3-dihydroxy-isovalerate. The polypeptide is Ketol-acid reductoisomerase (NADP(+)) (Psychrobacter sp. (strain PRwf-1)).